A 167-amino-acid polypeptide reads, in one-letter code: cAMP-dependent protein kinase type I-alpha regulatory subunit (167 aa).

At threonine 12 the chain carries Phosphothreonine. A phosphoserine mark is found at serine 14 and serine 20. Residues 30 to 33 carry the Pseudophosphorylation motif motif; it reads RGAI. The residue at position 34 (serine 34) is a Phosphoserine. 3',5'-cyclic AMP-binding positions include 51–78, 79–167, glutamate 147, and arginine 156; these read LFSHLDDNERILMGSTLRMYEEFLSKVS and ILES…ILKR. Serine 82 is subject to Phosphoserine.

The protein belongs to the cAMP-dependent kinase regulatory chain family. In terms of assembly, the inactive holoenzyme is composed of two regulatory chains and two catalytic chains. Activation by cAMP releases the two active catalytic monomers and the regulatory dimer. Interacts with PRKACA and PRKACB. PRKAR1A also interacts with RFC2; the complex may be involved in cell survival. Interacts with AKAP4. Interacts with RARA; the interaction occurs in the presence of cAMP or FSH and regulates RARA transcriptional activity. Interacts with the phosphorylated form of PJA2. Interacts with CBFA2T3. Interacts with PRKX; regulates this cAMP-dependent protein kinase. Interacts with smAKAP; this interaction may target PRKAR1A to the plasma membrane. Interacts with AICDA. In terms of processing, the pseudophosphorylation site binds to the substrate-binding region of the catalytic chain, resulting in the inhibition of its activity.

It is found in the cell membrane. Functionally, regulatory subunit of the cAMP-dependent protein kinases involved in cAMP signaling in cells. The polypeptide is cAMP-dependent protein kinase type I-alpha regulatory subunit (Mesocricetus auratus (Golden hamster)).